A 1342-amino-acid chain; its full sequence is DNA-directed RNA polymerase subunit beta (1342 aa).

The protein belongs to the RNA polymerase beta chain family. The RNAP catalytic core consists of 2 alpha, 1 beta, 1 beta' and 1 omega subunit. When a sigma factor is associated with the core the holoenzyme is formed, which can initiate transcription.

It carries out the reaction RNA(n) + a ribonucleoside 5'-triphosphate = RNA(n+1) + diphosphate. Functionally, DNA-dependent RNA polymerase catalyzes the transcription of DNA into RNA using the four ribonucleoside triphosphates as substrates. This is DNA-directed RNA polymerase subunit beta from Salmonella gallinarum (strain 287/91 / NCTC 13346).